Reading from the N-terminus, the 559-residue chain is MEKKENGLDGKQSGRVINGPTNPMVTPLLNDLYQFTMAYAYWKAGKQSERSVFDLYFRKNPFGGEYTIFAGLEECIKFLANFNLTDEEIDFVRDSLPGCEEAFCDYLRGLDCSDIEVYAISEGSVVFPKVPLLRIEGPVAVVQLLETPFLNLINYASLVATNAARHRFVAGKSKLLLEFGARRAQGPDGAISASKYCYLGGFDATSNVAAGKLFGIPLRGTHSHAFVSSFMSLDEIVDKVLRSSDGKSTCKDFICLVQTCLTKIQNSSSLQGIFSETNQSELAAFISYALAFPNSFLALVDTYDVMKSGIPNFCAVALALNELGYKAVGIRLDSGDLAYLSTEVRKFFCAIERDLKVPDFGKMIVTASNDLNEETVDALNKQGHEVDAFGIGTNLVTCYAQAALGCVFKLVEINNQPRIKLSEDVTKVSIPCKKRTYRLFGKEGYPLVDIMTGENEPPPKVGERLLCRHPFNESKRAYVVPQRVEELLKCYWRGNADEAREELEPLKELRNRCIKQLENMRPDHMRRLNPTPYKVSVSAKLYDFIHFLWLNEAPVGELH.

Nicotinate is bound by residues tyrosine 33 and threonine 221. Histidine 224 carries the phosphohistidine modification. Residue arginine 331 participates in nicotinate binding. Residue threonine 393 participates in 5-phospho-alpha-D-ribose 1-diphosphate binding.

This sequence belongs to the NAPRTase family. Requires Mg(2+) as cofactor. Mn(2+) is required as a cofactor. Transiently phosphorylated on a His residue during the reaction cycle. Phosphorylation strongly increases the affinity for substrates and increases the rate of nicotinate D-ribonucleotide production. Dephosphorylation regenerates the low-affinity form of the enzyme, leading to product release.

The enzyme catalyses nicotinate + 5-phospho-alpha-D-ribose 1-diphosphate + ATP + H2O = nicotinate beta-D-ribonucleotide + ADP + phosphate + diphosphate. It participates in cofactor biosynthesis; NAD(+) biosynthesis; nicotinate D-ribonucleotide from nicotinate: step 1/1. In terms of biological role, catalyzes the first step in the biosynthesis of NAD from nicotinic acid, the ATP-dependent synthesis of beta-nicotinate D-ribonucleotide from nicotinate and 5-phospho-D-ribose 1-phosphate. Helps prevent cellular oxidative stress via its role in NAD biosynthesis. The sequence is that of Nicotinate phosphoribosyltransferase 1 from Arabidopsis thaliana (Mouse-ear cress).